A 319-amino-acid polypeptide reads, in one-letter code: Methionyl-tRNA formyltransferase (319 aa).

112–115 lines the (6S)-5,6,7,8-tetrahydrofolate pocket; sequence SLLP.

It belongs to the Fmt family.

It catalyses the reaction L-methionyl-tRNA(fMet) + (6R)-10-formyltetrahydrofolate = N-formyl-L-methionyl-tRNA(fMet) + (6S)-5,6,7,8-tetrahydrofolate + H(+). In terms of biological role, attaches a formyl group to the free amino group of methionyl-tRNA(fMet). The formyl group appears to play a dual role in the initiator identity of N-formylmethionyl-tRNA by promoting its recognition by IF2 and preventing the misappropriation of this tRNA by the elongation apparatus. The sequence is that of Methionyl-tRNA formyltransferase from Pelobacter propionicus (strain DSM 2379 / NBRC 103807 / OttBd1).